Reading from the N-terminus, the 569-residue chain is Adenine deaminase 1 (569 aa).

Belongs to the metallo-dependent hydrolases superfamily. Adenine deaminase family. It depends on Mn(2+) as a cofactor.

The catalysed reaction is adenine + H2O + H(+) = hypoxanthine + NH4(+). The sequence is that of Adenine deaminase 1 from Rhizobium johnstonii (strain DSM 114642 / LMG 32736 / 3841) (Rhizobium leguminosarum bv. viciae).